Here is a 176-residue protein sequence, read N- to C-terminus: Prion-like protein doppel (176 aa).

Positions 1–25 (MRKHLSWWWLATVCMLLFSHLSAVQ) are cleaved as a signal peptide. Positions 27 to 50 (RGIKHRIKWNRKALPSTAQITEAQ) are flexible tail. O-linked (GalNAc...) threonine glycosylation occurs at T43. A globular region spans residues 51–152 (VAENRPGAFI…KHCEFWLERG (102 aa)). Disulfide bonds link C94–C145 and C108–C140. N-linked (GlcNAc...) asparagine glycans are attached at residues N98 and N110. The interval 122–139 (KPDNKLHQQVLWRLVQEL) is cu(2+) binding. A lipid anchor (GPI-anchor amidated glycine) is attached at G152. A propeptide spans 153 to 176 (AGLRVTMHQPVLLCLLALIWLTVK) (removed in mature form).

Belongs to the prion family. Post-translationally, N-glycosylated. N-glycosylated at two distinct sites. O-glycosylated. In terms of tissue distribution, expressed in testis, in Sertoli cells, ejaculated spermatozoa and in seminal fluid (at protein level).

It is found in the cell membrane. In terms of biological role, required for normal acrosome reaction and for normal male fertility. Can bind Cu(2+). The protein is Prion-like protein doppel (PRND) of Homo sapiens (Human).